Reading from the N-terminus, the 504-residue chain is Cytochrome P450 monooxygenase gliF (504 aa).

A helical transmembrane segment spans residues Ala-13–Leu-31. N-linked (GlcNAc...) asparagine glycosylation is found at Asn-197 and Asn-299. Residue Cys-449 coordinates heme.

Belongs to the cytochrome P450 family. It depends on heme as a cofactor.

It localises to the membrane. It participates in mycotoxin biosynthesis. In terms of biological role, cytochrome P450 monooxygenase; part of the gene cluster that mediates the biosynthesis of gliotoxin, a member of the epipolythiodioxopiperazine (ETP) class of toxins characterized by a disulfide bridged cyclic dipeptide. The first step in gliotoxin biosynthesis is the condensation of serine and phenylalanine to form the cyclo-L-phenylalanyl-L-serine diketopiperazine (DKP) by the NRPS gliP. GliP is also able to produce the DKP cyclo-L-tryptophanyl-L-serine, suggesting that the substrate specificity of the first adenylation (A) domain in gliP is sufficiently relaxed to accommodate both L-Phe and L-Trp. The cytochrome P450 monooxygenase gliC has been shown to catalyze the subsequent hydroxylation of the alpha-carbon of L-Phe in cyclo-L-phenylalanyl-L-serine whereas the second cytochrome P450 enzyme, gliF, is presumably involved in the modification of the DKP side chain. The glutathione S-transferase (GST) gliG then forms a bis-glutathionylated biosynthetic intermediate which is responsible for the sulfurization of gliotoxin. This bis-glutathionylated intermediate is subsequently processed by the gamma-glutamyl cyclotransferase gliK to remove both gamma-glutamyl moieties. Subsequent processing via gliI yields a biosynthetic intermediate, which is N-methylated via the N-methyltransferase gliN, before the gliotoxin oxidoreductase gliT-mediated disulfide bridge closure. GliN-mediated amide methylation confers stability to ETP, damping the spontaneous formation of tri- and tetrasulfides. Intracellular dithiol gliotoxin oxidized by gliT is subsequently effluxed by gliA. Gliotoxin contributes to pathogenesis during invasive aspergillosis. In macrophages and neutrophils, gliotoxin showed inhibition of various different cell functions including cytokine production, antigen presentation, phagocytosis, and production of reactive oxygen species. The protein is Cytochrome P450 monooxygenase gliF of Aspergillus fumigatus (strain ATCC MYA-4609 / CBS 101355 / FGSC A1100 / Af293) (Neosartorya fumigata).